A 609-amino-acid polypeptide reads, in one-letter code: MCGIVGAIAQRDVAEILLEGLRRLEYRGYDSAGLAVVDAEGHMTRLRRLGKVQMLAQAAEEHPLHGGTGIAHTRWATHGEPSEANAHPHVSEHIVVVHNGIIENHEPLREALKARGYTFVSETDTEVIAHLVNWELKQGGTLREAVLRAIPQLRGAYGTVIMDTRHPDTLLAARSGSPLVIGLGMGENFIASDQLALLPVTRRFIFLEEGDIAEITRRSVNIFDNTGAEVKRQDIESNLQYDAGDKGIYRHYMQKEIYEQPNAIKNTLTGRISHGQVDLSELGPNADELLSKVEHIQILACGTSYNSGMVSRYWFESLAGIPCDVEIASEFRYRKSAVRRNSLMITLSQSGETADTLAGLRLSKELGYLGSLAICNVPGSSLVRESDLALMTNAGTEIGVASTKAFTTQLTVLLMLVAKLSRLKGLDASIEHDIVHGLQALPSRIEQMLSQDKRIELLAEDFSDKHHALFLGRGDQYPIALEGALKLKEISYIHAEAYAAGELKHGPLALIDADMPVIVVAPNNELLEKLKSNIEEVRARGGQLYVFADQDAGFVSSDNMHIIEMPHVEEVIAPIFYTVPLQLLAYHVALIKGTDVDQPRNLAKSVTVE.

Residue cysteine 2 is the Nucleophile; for GATase activity of the active site. The Glutamine amidotransferase type-2 domain maps to 2–218 (CGIVGAIAQR…EGDIAEITRR (217 aa)). SIS domains lie at 286-426 (ADEL…LKGL) and 458-599 (LAED…VDQP). The active-site For Fru-6P isomerization activity is lysine 604.

As to quaternary structure, homodimer.

The protein localises to the cytoplasm. It catalyses the reaction D-fructose 6-phosphate + L-glutamine = D-glucosamine 6-phosphate + L-glutamate. Functionally, catalyzes the first step in hexosamine metabolism, converting fructose-6P into glucosamine-6P using glutamine as a nitrogen source. The polypeptide is Glutamine--fructose-6-phosphate aminotransferase [isomerizing] (Salmonella paratyphi A (strain ATCC 9150 / SARB42)).